Reading from the N-terminus, the 81-residue chain is Sulfur carrier protein TusA (81 aa).

The active-site Cysteine persulfide intermediate is the cysteine 19.

This sequence belongs to the sulfur carrier protein TusA family. In terms of assembly, interacts with IscS.

It localises to the cytoplasm. Its pathway is tRNA modification. In terms of biological role, sulfur carrier protein involved in sulfur trafficking in the cell. Part of a sulfur-relay system required for 2-thiolation during synthesis of 2-thiouridine of the modified wobble base 5-methylaminomethyl-2-thiouridine (mnm(5)s(2)U) in tRNA. Interacts with IscS and stimulates its cysteine desulfurase activity. Accepts an activated sulfur from IscS, which is then transferred to TusD, and thus determines the direction of sulfur flow from IscS to 2-thiouridine formation. Also appears to be involved in sulfur transfer for the biosynthesis of molybdopterin. In Klebsiella pneumoniae subsp. pneumoniae (strain ATCC 700721 / MGH 78578), this protein is Sulfur carrier protein TusA.